The primary structure comprises 444 residues: Elongation factor 1-alpha (444 aa).

Positions 15-236 (KPHINLAVVG…VLDTFQPPPR (222 aa)) constitute a tr-type G domain. A G1 region spans residues 24–31 (GHVDNGKS). 24–31 (GHVDNGKS) contributes to the GTP binding site. Ser31 serves as a coordination point for Mg(2+). The tract at residues 80–84 (GVTIE) is G2. The tract at residues 101-104 (DLPG) is G3. GTP contacts are provided by residues 101-105 (DLPGH) and 163-166 (NKMD). Residues 163-166 (NKMD) form a G4 region. Residues 202–204 (SAV) form a G5 region.

The protein belongs to the TRAFAC class translation factor GTPase superfamily. Classic translation factor GTPase family. EF-Tu/EF-1A subfamily.

It is found in the cytoplasm. It catalyses the reaction GTP + H2O = GDP + phosphate + H(+). Functionally, GTP hydrolase that promotes the GTP-dependent binding of aminoacyl-tRNA to the A-site of ribosomes during protein biosynthesis. The sequence is that of Elongation factor 1-alpha from Pyrobaculum arsenaticum (strain DSM 13514 / JCM 11321 / PZ6).